The primary structure comprises 273 residues: Dermonecrotic toxin LdSicTox-alphaIB3aii (273 aa).

The active site involves His-5. Residues Glu-25 and Asp-27 each coordinate Mg(2+). His-41 acts as the Nucleophile in catalysis. 2 disulfide bridges follow: Cys-45–Cys-51 and Cys-47–Cys-190. Asp-85 is a Mg(2+) binding site.

It belongs to the arthropod phospholipase D family. Class II subfamily. Requires Mg(2+) as cofactor. As to expression, expressed by the venom gland.

It is found in the secreted. The enzyme catalyses an N-(acyl)-sphingosylphosphocholine = an N-(acyl)-sphingosyl-1,3-cyclic phosphate + choline. It catalyses the reaction an N-(acyl)-sphingosylphosphoethanolamine = an N-(acyl)-sphingosyl-1,3-cyclic phosphate + ethanolamine. The catalysed reaction is a 1-acyl-sn-glycero-3-phosphocholine = a 1-acyl-sn-glycero-2,3-cyclic phosphate + choline. It carries out the reaction a 1-acyl-sn-glycero-3-phosphoethanolamine = a 1-acyl-sn-glycero-2,3-cyclic phosphate + ethanolamine. Functionally, dermonecrotic toxins cleave the phosphodiester linkage between the phosphate and headgroup of certain phospholipids (sphingolipid and lysolipid substrates), forming an alcohol (often choline) and a cyclic phosphate. This toxin acts on sphingomyelin (SM). It may also act on ceramide phosphoethanolamine (CPE), lysophosphatidylcholine (LPC) and lysophosphatidylethanolamine (LPE), but not on lysophosphatidylserine (LPS), and lysophosphatidylglycerol (LPG). It acts by transphosphatidylation, releasing exclusively cyclic phosphate products as second products. Induces dermonecrosis, hemolysis, increased vascular permeability, edema, inflammatory response, and platelet aggregation. This is Dermonecrotic toxin LdSicTox-alphaIB3aii from Loxosceles deserta (Desert recluse spider).